Consider the following 249-residue polypeptide: Proteasome activator complex subunit 1 (249 aa).

Residues 60-102 (PLDIPVPDPVKEKEKEERKKQQEKEDKDEKKKGEDEDKGPPCG) form a disordered region. The segment covering 68–98 (PVKEKEKEERKKQQEKEDKDEKKKGEDEDKG) has biased composition (basic and acidic residues).

This sequence belongs to the PA28 family. In terms of assembly, heterodimer of PSME1 and PSME2, which forms a hexameric ring. PSME1 can form homoheptamers.

In terms of biological role, implicated in immunoproteasome assembly and required for efficient antigen processing. The PA28 activator complex enhances the generation of class I binding peptides by altering the cleavage pattern of the proteasome. The polypeptide is Proteasome activator complex subunit 1 (PSME1) (Homo sapiens (Human)).